The primary structure comprises 291 residues: MSTASLFSFPSFHLRSLLPSLSSSSSSSSSRFAPPRLSPIRSPAPRTQLSVRAFSAVTMTDSNDAGMDAVQRRLMFEDECILVDENDRVVGHDTKYNCHLMEKIEAENLLHRAFSVFLFNSKYELLLQQRSKTKVTFPLVWTNTCCSHPLYRESELIEENVLGVRNAAQRKLFDELGIVAEDVPVDEFTPLGRMLYKAPSDGKWGEHEVDYLLFIVRDVKLQPNPDEVAEIKYVSREELKELVKKADAGDEAVKLSPWFRLVVDNFLMKWWDHVEKGTITEAADMKTIHKL.

Residues 1–52 (MSTASLFSFPSFHLRSLLPSLSSSSSSSSSRFAPPRLSPIRSPAPRTQLSVR) constitute a chloroplast transit peptide. S2 carries the N-acetylthreonine modification. A compositionally biased stretch (low complexity) spans 20–39 (SLSSSSSSSSSRFAPPRLSP). The segment at 20 to 43 (SLSSSSSSSSSRFAPPRLSPIRSP) is disordered. Substrate is bound at residue K95. Positions 99 and 111 each coordinate Mg(2+). A Nudix hydrolase domain is found at 109 to 261 (LLHRAFSVFL…AVKLSPWFRL (153 aa)). Residues R130 and K134 each coordinate substrate. C146 is an active-site residue. Residue S147 coordinates substrate. The short motif at 147–177 (SHPLYRESELIEENVLGVRNAAQRKLFDELG) is the Nudix box element. Mg(2+) contacts are provided by E206 and E208. Residue E208 is part of the active site.

This sequence belongs to the IPP isomerase type 1 family. It depends on Mg(2+) as a cofactor.

The protein resides in the plastid. It is found in the chloroplast. It localises to the cytoplasm. The catalysed reaction is isopentenyl diphosphate = dimethylallyl diphosphate. It functions in the pathway isoprenoid biosynthesis; dimethylallyl diphosphate biosynthesis; dimethylallyl diphosphate from isopentenyl diphosphate: step 1/1. Its pathway is porphyrin-containing compound metabolism; chlorophyll biosynthesis. Functionally, catalyzes the 1,3-allylic rearrangement of the homoallylic substrate isopentenyl (IPP) to its highly electrophilic allylic isomer, dimethylallyl diphosphate (DMAPP). This Arabidopsis thaliana (Mouse-ear cress) protein is Isopentenyl-diphosphate Delta-isomerase I, chloroplastic (IPP1).